Here is a 207-residue protein sequence, read N- to C-terminus: Large ribosomal subunit protein uL4 (207 aa).

Positions 49 to 78 (HAVKNRSAVSGGGRKPWRQKGTGRARQGSI) are disordered.

The protein belongs to the universal ribosomal protein uL4 family. As to quaternary structure, part of the 50S ribosomal subunit.

Functionally, one of the primary rRNA binding proteins, this protein initially binds near the 5'-end of the 23S rRNA. It is important during the early stages of 50S assembly. It makes multiple contacts with different domains of the 23S rRNA in the assembled 50S subunit and ribosome. In terms of biological role, forms part of the polypeptide exit tunnel. In Streptococcus agalactiae serotype Ia (strain ATCC 27591 / A909 / CDC SS700), this protein is Large ribosomal subunit protein uL4.